Consider the following 325-residue polypeptide: Probable cell division protein WhiA (325 aa).

The H-T-H motif DNA-binding region spans Ser273–Asn306.

The protein belongs to the WhiA family.

Functionally, involved in cell division and chromosome segregation. This chain is Probable cell division protein WhiA, found in Frankia alni (strain DSM 45986 / CECT 9034 / ACN14a).